Here is a 255-residue protein sequence, read N- to C-terminus: 4-diphosphocytidyl-2-C-methyl-D-erythritol kinase (255 aa).

Lysine 6 is an active-site residue. Residue 95-105 (PVCAGLGGGSS) coordinates ATP. Aspartate 137 is an active-site residue.

Belongs to the GHMP kinase family. IspE subfamily.

It catalyses the reaction 4-CDP-2-C-methyl-D-erythritol + ATP = 4-CDP-2-C-methyl-D-erythritol 2-phosphate + ADP + H(+). The protein operates within isoprenoid biosynthesis; isopentenyl diphosphate biosynthesis via DXP pathway; isopentenyl diphosphate from 1-deoxy-D-xylulose 5-phosphate: step 3/6. Its function is as follows. Catalyzes the phosphorylation of the position 2 hydroxy group of 4-diphosphocytidyl-2C-methyl-D-erythritol. The protein is 4-diphosphocytidyl-2-C-methyl-D-erythritol kinase of Campylobacter jejuni subsp. jejuni serotype O:23/36 (strain 81-176).